We begin with the raw amino-acid sequence, 151 residues long: 3-dehydroquinate dehydratase (151 aa).

Residue Tyr24 is the Proton acceptor of the active site. The substrate site is built by Asn76, His82, and Asp89. His102 functions as the Proton donor in the catalytic mechanism. Residues 103–104 and Arg113 each bind substrate; that span reads VS.

The protein belongs to the type-II 3-dehydroquinase family. Homododecamer.

It catalyses the reaction 3-dehydroquinate = 3-dehydroshikimate + H2O. Its pathway is metabolic intermediate biosynthesis; chorismate biosynthesis; chorismate from D-erythrose 4-phosphate and phosphoenolpyruvate: step 3/7. In terms of biological role, catalyzes a trans-dehydration via an enolate intermediate. The chain is 3-dehydroquinate dehydratase from Rhodopseudomonas palustris (strain ATCC BAA-98 / CGA009).